Reading from the N-terminus, the 86-residue chain is Co-chaperonin GroES (86 aa).

The protein belongs to the GroES chaperonin family. In terms of assembly, heptamer of 7 subunits arranged in a ring. Interacts with the chaperonin GroEL.

It is found in the cytoplasm. Together with the chaperonin GroEL, plays an essential role in assisting protein folding. The GroEL-GroES system forms a nano-cage that allows encapsulation of the non-native substrate proteins and provides a physical environment optimized to promote and accelerate protein folding. GroES binds to the apical surface of the GroEL ring, thereby capping the opening of the GroEL channel. The chain is Co-chaperonin GroES from Campylobacter concisus (strain 13826).